A 172-amino-acid chain; its full sequence is Ribosome maturation factor RimM (172 aa).

In terms of domain architecture, PRC barrel spans 95-168 (QEGEFYYHQI…CVDVELMEGL (74 aa)).

The protein belongs to the RimM family. In terms of assembly, binds ribosomal protein uS19.

The protein resides in the cytoplasm. Functionally, an accessory protein needed during the final step in the assembly of 30S ribosomal subunit, possibly for assembly of the head region. Essential for efficient processing of 16S rRNA. May be needed both before and after RbfA during the maturation of 16S rRNA. It has affinity for free ribosomal 30S subunits but not for 70S ribosomes. The polypeptide is Ribosome maturation factor RimM (Streptococcus pyogenes serotype M49 (strain NZ131)).